The sequence spans 476 residues: Dermokine (476 aa).

An N-terminal signal peptide occupies residues 1 to 21 (MKFQGPLACLLLALCLGSGEA). Composition is skewed to gly residues over residues 153–169 (SQGG…GGLG), 193–202 (WGQGGNGGPP), 236–259 (GSGG…GSGS), and 268–298 (SSGG…GSRG). A disordered region spans residues 153-351 (SQGGLGGQGQ…ESGIQNSETS (199 aa)). Low complexity predominate over residues 299 to 315 (DSGSESSWGSSTGSSSG). Residues 316-326 (NHGGSGGGNGH) show a composition bias toward gly residues.

The protein belongs to the dermokine family. As to quaternary structure, homooligomer. Seems to be able to homodimerize and homotrimerize. O-glycosylated. As to expression, expressed in epidermis; in the spinous and granular layers and in placenta. Also found in the epithelia of the small intestine, macrophages of the lung and endothelial cells of the lung. Isoform 15 is expressed in epidermis and placenta. Isoform 1 is expressed in epidermis.

Its subcellular location is the secreted. Its function is as follows. May act as a soluble regulator of keratinocyte differentiation. This is Dermokine (DMKN) from Homo sapiens (Human).